The primary structure comprises 393 residues: Protein TsgA (393 aa).

12 helical membrane-spanning segments follow: residues Trp11–Met31, Phe51–Pro71, Phe78–Leu98, Ala101–Ile121, Leu134–Phe154, Trp162–Gly182, Ile206–Ile226, Ala245–Leu265, Ile273–Gln293, Trp298–Gly318, Phe332–Val352, and Leu361–Val381.

It belongs to the major facilitator superfamily. TsgA family.

Its subcellular location is the cell inner membrane. The sequence is that of Protein TsgA from Salmonella arizonae (strain ATCC BAA-731 / CDC346-86 / RSK2980).